A 359-amino-acid polypeptide reads, in one-letter code: Tyrosine-protein phosphatase non-receptor type 7 (359 aa).

Positions 1–33 (MVQACEGRSRAQLPTLSLGADMTQPPPTKAPAK) are disordered. Residues 38 to 51 (LQERRGSSVALMLD) are interaction with MAP kinases. Serine 44 is subject to Phosphoserine. Threonine 66 is subject to Phosphothreonine. Serine 93 and serine 143 each carry phosphoserine. Residues 97 to 349 (LEEEFLKIPS…QFLHHTLALY (253 aa)) form the Tyrosine-protein phosphatase domain. Substrate contacts are provided by residues aspartate 257, 290–296 (CSAGIGR), and glutamine 334. Cysteine 290 functions as the Phosphocysteine intermediate in the catalytic mechanism. The residue at position 290 (cysteine 290) is a Cysteine sulfenic acid (-SOH).

It belongs to the protein-tyrosine phosphatase family. Non-receptor class subfamily. In terms of processing, oxidized at active site cysteine. Treatment with pervanadate (vanadate and H(2)O(2)) or with antigen enhanced oxidation of active site cysteine. As to expression, expressed in bone marrow-derived mast cells.

The protein localises to the cytoplasm. It is found in the cytoskeleton. It carries out the reaction O-phospho-L-tyrosyl-[protein] + H2O = L-tyrosyl-[protein] + phosphate. Its activity is regulated as follows. Inhibited upon FCER1A triggering. In terms of biological role, may play a role in the regulation of T and B-lymphocyte development and signal transduction. The protein is Tyrosine-protein phosphatase non-receptor type 7 (Ptpn7) of Mus musculus (Mouse).